The following is a 298-amino-acid chain: Oxidoreductase YdhF (298 aa).

Tyr55 acts as the Proton donor in catalysis. NADP(+)-binding positions include 158 to 159 (SN), 209 to 220 (WSCLGGGRLFND), and 263 to 264 (SG).

The protein belongs to the aldo/keto reductase family. Aldo/keto reductase 2 subfamily.

In terms of biological role, may function as oxidoreductase. In Escherichia coli (strain K12), this protein is Oxidoreductase YdhF (ydhF).